The chain runs to 515 residues: MPKERRSRRRPQPIIRWVSLTLTLLSLCQPIQTWRCSLSLGNQQWMTTYNQEAKFSIAIDQILEAHNQSPFCPRSPRYTLDFVNGYPKIYWPPPQGRRRFGARAMVTYDCEPRCPYVGADHFDCPHWDNASQADQGSFYVNHQILFLHLKQCHGIFTLTWEIWGYDPLITFSLHKIPDPPQPDFPQLNSDWVPSVRSWALLLNQTARAFPDCAICWEPSPPWAPEILVYNKTISNSGPGLALPDAQIFWVNTSLFNTTQGWHHPSQRLLFNVSQGNALLLPPISLVNLSTASSAPPTRVRRSPAAALTLGLALSVGLTGINVAVSALSHQRLTSLIHVLEQDQQRLITAINQTHYNLLNVASVVAQNRRGLDWLYIRLGFQSLCPTINEPCCFLRIQNDSIIRLGDLQPLSQRVSTDWQWPWNWDLGLTAWVRETIHSVLSLFLLALFLLFLAPCLIKCLTSRLLKLLRQAPHFPEISLAPKPDSDYQALLPSAPEIYSHLSPTKPDYINLRPCP.

The signal sequence occupies residues 1-33; it reads MPKERRSRRRPQPIIRWVSLTLTLLSLCQPIQT. The Extracellular portion of the chain corresponds to 34–435; sequence WRCSLSLGNQ…LGLTAWVRET (402 aa). Asparagine 129 and asparagine 203 each carry an N-linked (GlcNAc...) asparagine; by host glycan. The short motif at 212-215 is the CXXC element; the sequence is CAIC. Disulfide bonds link cysteine 212-cysteine 215, cysteine 212-cysteine 392, and cysteine 384-cysteine 391. Asparagine 230, asparagine 251, asparagine 256, asparagine 271, and asparagine 287 each carry an N-linked (GlcNAc...) asparagine; by host glycan. The fusion peptide stretch occupies residues 304-324; sequence AAALTLGLALSVGLTGINVAV. Coiled coils occupy residues 330-376 and 388-420; these read QRLT…WLYI and NEPC…DWQW. The N-linked (GlcNAc...) asparagine; by host glycan is linked to asparagine 351. The immunosuppression stretch occupies residues 365–381; that stretch reads AQNRRGLDWLYIRLGFQ. The CX6CC motif lies at 384–392; sequence CPTINEPCC. Asparagine 398 carries an N-linked (GlcNAc...) asparagine; by host glycan. A helical transmembrane segment spans residues 436–456; it reads IHSVLSLFLLALFLLFLAPCL. Cysteine 455 is lipidated: S-palmitoyl cysteine; by host. At 457 to 515 the chain is on the cytoplasmic side; it reads IKCLTSRLLKLLRQAPHFPEISLAPKPDSDYQALLPSAPEIYSHLSPTKPDYINLRPCP.

As to quaternary structure, the mature envelope protein (Env) consists of a trimer of SU-TM heterodimers attached by a labile interchain disulfide bond. In terms of processing, specific enzymatic cleavages in vivo yield mature proteins. Envelope glycoproteins are synthesized as an inactive precursor that is N-glycosylated and processed likely by host cell furin or by a furin-like protease in the Golgi to yield the mature SU and TM proteins. The cleavage site between SU and TM requires the minimal sequence [KR]-X-[KR]-R. Post-translationally, the CXXC motif is highly conserved across a broad range of retroviral envelope proteins. It is thought to participate in the formation of a labile disulfide bond possibly with the CX6CC motif present in the transmembrane protein. Isomerization of the intersubunit disulfide bond to an SU intrachain disulfide bond is thought to occur upon receptor recognition in order to allow membrane fusion. The transmembrane protein is palmitoylated.

The protein resides in the virion membrane. It is found in the host cell membrane. In terms of biological role, the surface protein (SU) attaches the virus to the host cell by binding to its receptor. This interaction triggers the refolding of the transmembrane protein (TM) and is thought to activate its fusogenic potential by unmasking its fusion peptide. Fusion occurs at the host cell plasma membrane. Functionally, the transmembrane protein (TM) acts as a class I viral fusion protein. Under the current model, the protein has at least 3 conformational states: pre-fusion native state, pre-hairpin intermediate state, and post-fusion hairpin state. During viral and target cell membrane fusion, the coiled coil regions (heptad repeats) assume a trimer-of-hairpins structure, positioning the fusion peptide in close proximity to the C-terminal region of the ectodomain. The formation of this structure appears to drive apposition and subsequent fusion of viral and target cell membranes. Membranes fusion leads to delivery of the nucleocapsid into the cytoplasm. The sequence is that of Envelope glycoprotein (env) from Bovine leukemia virus (isolate Belgium LB285) (BLV).